A 968-amino-acid chain; its full sequence is RNA polymerase-associated protein RapA (968 aa).

A Helicase ATP-binding domain is found at 164-334 (EVGQRHAPRV…FARLRLLDPN (171 aa)). Position 177–184 (177–184 (DEVGLGKT)) interacts with ATP. The DEAH box signature appears at 280–283 (DEAH). One can recognise a Helicase C-terminal domain in the interval 490-664 (RVEWLLNYLV…AAPTEQEGLD (175 aa)).

Belongs to the SNF2/RAD54 helicase family. RapA subfamily. As to quaternary structure, interacts with the RNAP. Has a higher affinity for the core RNAP than for the holoenzyme. Its ATPase activity is stimulated by binding to RNAP.

Functionally, transcription regulator that activates transcription by stimulating RNA polymerase (RNAP) recycling in case of stress conditions such as supercoiled DNA or high salt concentrations. Probably acts by releasing the RNAP, when it is trapped or immobilized on tightly supercoiled DNA. Does not activate transcription on linear DNA. Probably not involved in DNA repair. This is RNA polymerase-associated protein RapA from Serratia proteamaculans (strain 568).